Consider the following 471-residue polypeptide: A-type ATP synthase subunit B (471 aa).

The protein belongs to the ATPase alpha/beta chains family. In terms of assembly, has multiple subunits with at least A(3), B(3), C, D, E, F, H, I and proteolipid K(x).

The protein localises to the cell membrane. Its function is as follows. Component of the A-type ATP synthase that produces ATP from ADP in the presence of a proton gradient across the membrane. The B chain is a regulatory subunit. This Natronomonas pharaonis (strain ATCC 35678 / DSM 2160 / CIP 103997 / JCM 8858 / NBRC 14720 / NCIMB 2260 / Gabara) (Halobacterium pharaonis) protein is A-type ATP synthase subunit B.